The sequence spans 631 residues: Phosphomethylpyrimidine synthase (631 aa).

Substrate contacts are provided by residues N239, M268, Y297, H333, 353–355, 394–397, and E433; these read SRG and DGLR. Position 437 (H437) interacts with Zn(2+). Residue Y460 participates in substrate binding. H501 is a Zn(2+) binding site. [4Fe-4S] cluster is bound by residues C581, C584, and C589.

The protein belongs to the ThiC family. As to quaternary structure, homodimer. The cofactor is [4Fe-4S] cluster.

It carries out the reaction 5-amino-1-(5-phospho-beta-D-ribosyl)imidazole + S-adenosyl-L-methionine = 4-amino-2-methyl-5-(phosphooxymethyl)pyrimidine + CO + 5'-deoxyadenosine + formate + L-methionine + 3 H(+). Its pathway is cofactor biosynthesis; thiamine diphosphate biosynthesis. Functionally, catalyzes the synthesis of the hydroxymethylpyrimidine phosphate (HMP-P) moiety of thiamine from aminoimidazole ribotide (AIR) in a radical S-adenosyl-L-methionine (SAM)-dependent reaction. The sequence is that of Phosphomethylpyrimidine synthase from Escherichia coli (strain 55989 / EAEC).